The sequence spans 301 residues: Heterogeneous nuclear ribonucleoprotein D-like (301 aa).

The tract at residues 1-29 (MEDATEMSGGAEEFAEGSKINASKNQQDD) is disordered. RRM domains are found at residues 30–112 (GKMF…KGKE) and 115–194 (KKVF…QPKE). Disordered stretches follow at residues 194–230 (EVYRQQQQQQKGGKSNASGGRGGGRGRGRGQGQNWNQ) and 269–301 (GYGPGYTDYSGQQSTYGKASRGGGNHQNNYQPY). Residues 212–224 (GGRGGGRGRGRGQ) show a composition bias toward gly residues.

Its subcellular location is the nucleus. The protein resides in the cytoplasm. In terms of biological role, acts as a transcriptional regulator. Binds DNA and RNA. The sequence is that of Heterogeneous nuclear ribonucleoprotein D-like (HNRNPDL) from Gallus gallus (Chicken).